The following is a 289-amino-acid chain: SAGA-associated factor 29kDa (289 aa).

Residues 9-36 adopt a coiled-coil conformation; it reads AQQIQDRLKDIQQNIHNVDEERRRAENS. An SGF29 C-terminal domain is found at 137–278; it reads GNYVAKVGDN…VIAYRPTKKG (142 aa). Histone H3K4me3 N-terminus binding stretches follow at residues 179 to 181 and 225 to 228; these read DID and QTTC. The interval 249 to 251 is histone H3K4me3 binding; that stretch reads FED.

The protein belongs to the SGF29 family. As to quaternary structure, component of the Spt-Ada-Gcn5 acetyltransferase (SAGA) complex consisting of wda/Taf5L, Saf6, Taf9, Taf10b, Taf12, Ada1, Spt3, Spt7, Spt20, Sf3b3, Sf3b5, Nipped-A/Tra1, a histone acetyltransferase (HAT) module made up of Gcn5, Ada2b (Isoform B), Ada3 and Sgf29, and a deubiquitinase (DUB) module made up of not/nonstop, Sgf11, Atxn7 and e(y)2. Component of the Chiffon histone acetyltransferase (CHAT) complex consisting of Ada3, Sgf29, Gcn5, chif/chiffon and Ada2b (Isoform A).

The protein localises to the nucleus. Component of both the SAGA and CHAT histone acetyltransferase complexes, which both predominantly acetylate histone H3. This chain is SAGA-associated factor 29kDa, found in Drosophila melanogaster (Fruit fly).